Here is a 106-residue protein sequence, read N- to C-terminus: A-type ATP synthase subunit F (106 aa).

It belongs to the V-ATPase F subunit family. Has multiple subunits with at least A(3), B(3), C, D, E, F, H, I and proteolipid K(x).

The protein resides in the cell membrane. Functionally, component of the A-type ATP synthase that produces ATP from ADP in the presence of a proton gradient across the membrane. The protein is A-type ATP synthase subunit F of Methanothermobacter thermautotrophicus (strain ATCC 29096 / DSM 1053 / JCM 10044 / NBRC 100330 / Delta H) (Methanobacterium thermoautotrophicum).